We begin with the raw amino-acid sequence, 158 residues long: Transcription elongation factor GreA (158 aa).

Belongs to the GreA/GreB family.

Functionally, necessary for efficient RNA polymerase transcription elongation past template-encoded arresting sites. The arresting sites in DNA have the property of trapping a certain fraction of elongating RNA polymerases that pass through, resulting in locked ternary complexes. Cleavage of the nascent transcript by cleavage factors such as GreA or GreB allows the resumption of elongation from the new 3'terminus. GreA releases sequences of 2 to 3 nucleotides. The protein is Transcription elongation factor GreA of Pelagibacter ubique (strain HTCC1062).